Reading from the N-terminus, the 541-residue chain is Glucose-6-phosphate isomerase (541 aa).

E346 acts as the Proton donor in catalysis. Active-site residues include H377 and K506.

Belongs to the GPI family.

Its subcellular location is the cytoplasm. The catalysed reaction is alpha-D-glucose 6-phosphate = beta-D-fructose 6-phosphate. It participates in carbohydrate biosynthesis; gluconeogenesis. Its pathway is carbohydrate degradation; glycolysis; D-glyceraldehyde 3-phosphate and glycerone phosphate from D-glucose: step 2/4. Its function is as follows. Catalyzes the reversible isomerization of glucose-6-phosphate to fructose-6-phosphate. The polypeptide is Glucose-6-phosphate isomerase (Agrobacterium fabrum (strain C58 / ATCC 33970) (Agrobacterium tumefaciens (strain C58))).